Consider the following 99-residue polypeptide: Co-chaperonin GroES (99 aa).

The protein belongs to the GroES chaperonin family. As to quaternary structure, heptamer of 7 subunits arranged in a ring. Interacts with the chaperonin GroEL.

The protein resides in the cytoplasm. Together with the chaperonin GroEL, plays an essential role in assisting protein folding. The GroEL-GroES system forms a nano-cage that allows encapsulation of the non-native substrate proteins and provides a physical environment optimized to promote and accelerate protein folding. GroES binds to the apical surface of the GroEL ring, thereby capping the opening of the GroEL channel. The protein is Co-chaperonin GroES of Corynebacterium jeikeium (strain K411).